A 39-amino-acid chain; its full sequence is Photosystem II reaction center protein J (39 aa).

The chain crosses the membrane as a helical span at residues Ile7–Phe27.

This sequence belongs to the PsbJ family. In terms of assembly, PSII is composed of 1 copy each of membrane proteins PsbA, PsbB, PsbC, PsbD, PsbE, PsbF, PsbH, PsbI, PsbJ, PsbK, PsbL, PsbM, PsbT, PsbX, PsbY, PsbZ, Psb30/Ycf12, at least 3 peripheral proteins of the oxygen-evolving complex and a large number of cofactors. It forms dimeric complexes.

Its subcellular location is the plastid. The protein resides in the chloroplast thylakoid membrane. In terms of biological role, one of the components of the core complex of photosystem II (PSII). PSII is a light-driven water:plastoquinone oxidoreductase that uses light energy to abstract electrons from H(2)O, generating O(2) and a proton gradient subsequently used for ATP formation. It consists of a core antenna complex that captures photons, and an electron transfer chain that converts photonic excitation into a charge separation. The sequence is that of Photosystem II reaction center protein J from Rhodomonas salina (Cryptomonas salina).